Here is a 545-residue protein sequence, read N- to C-terminus: Chaperonin GroEL 1 (545 aa).

Residues 29–32 (TLGP), 86–90 (DGTTT), G413, 479–481 (DAA), and D495 each bind ATP. Residues 525 to 545 (PEPKENNPAGSGAGMGGDFDY) are disordered. Residues 535–545 (SGAGMGGDFDY) are compositionally biased toward gly residues.

It belongs to the chaperonin (HSP60) family. Forms a cylinder of 14 subunits composed of two heptameric rings stacked back-to-back. Interacts with the co-chaperonin GroES.

Its subcellular location is the cytoplasm. It carries out the reaction ATP + H2O + a folded polypeptide = ADP + phosphate + an unfolded polypeptide.. Together with its co-chaperonin GroES, plays an essential role in assisting protein folding. The GroEL-GroES system forms a nano-cage that allows encapsulation of the non-native substrate proteins and provides a physical environment optimized to promote and accelerate protein folding. The polypeptide is Chaperonin GroEL 1 (Thermostichus vulcanus (Synechococcus vulcanus)).